The sequence spans 273 residues: Probable ribosomal RNA small subunit methyltransferase A (273 aa).

S-adenosyl-L-methionine-binding residues include N26, L28, G53, E74, D98, and N113.

This sequence belongs to the class I-like SAM-binding methyltransferase superfamily. rRNA adenine N(6)-methyltransferase family. RsmA subfamily.

The protein localises to the cytoplasm. Functionally, specifically dimethylates two adjacent adenosines in the loop of a conserved hairpin near the 3'-end of 16S rRNA in the 30S particle. May play a critical role in biogenesis of 30S subunits. In Methanothermobacter thermautotrophicus (strain ATCC 29096 / DSM 1053 / JCM 10044 / NBRC 100330 / Delta H) (Methanobacterium thermoautotrophicum), this protein is Probable ribosomal RNA small subunit methyltransferase A.